The sequence spans 390 residues: Alkanesulfonate monooxygenase 1 (390 aa).

The disordered stretch occupies residues 364–390 (TGSSVNTGPFGETIAGDHRPKSLASAS).

This sequence belongs to the SsuD family.

It catalyses the reaction an alkanesulfonate + FMNH2 + O2 = an aldehyde + FMN + sulfite + H2O + 2 H(+). In terms of biological role, catalyzes the desulfonation of aliphatic sulfonates. This chain is Alkanesulfonate monooxygenase 1 (ssuD1), found in Mesorhizobium japonicum (strain LMG 29417 / CECT 9101 / MAFF 303099) (Mesorhizobium loti (strain MAFF 303099)).